We begin with the raw amino-acid sequence, 483 residues long: GTPase Der (483 aa).

EngA-type G domains follow at residues 3 to 167 (FTLA…GEER) and 212 to 387 (LRIA…EIWN). GTP-binding positions include 9-16 (GRPNVGKS), 56-60 (DTAGL), 119-122 (NKAE), 218-225 (GRPNAGKS), 265-269 (DTAGM), and 330-333 (NKWD). In terms of domain architecture, KH-like spans 388–472 (RRISTGRLNR…PIRLSLRTSD (85 aa)).

Belongs to the TRAFAC class TrmE-Era-EngA-EngB-Septin-like GTPase superfamily. EngA (Der) GTPase family. As to quaternary structure, associates with the 50S ribosomal subunit.

In terms of biological role, GTPase that plays an essential role in the late steps of ribosome biogenesis. The sequence is that of GTPase Der from Brucella ovis (strain ATCC 25840 / 63/290 / NCTC 10512).